The primary structure comprises 233 residues: Membrane glycoprotein UL9 (233 aa).

A signal peptide spans 1 to 20; that stretch reads MSKRLQVFPWITILFYTSKS. Residues Asn40, Asn94, Asn101, Asn131, and Asn169 are each glycosylated (N-linked (GlcNAc...) asparagine; by host). A helical transmembrane segment spans residues 194-214; it reads MWIIPLVIVITIIVLICFKFP.

Belongs to the HHV-5 UL9 family.

Its subcellular location is the host membrane. This Homo sapiens (Human) protein is Membrane glycoprotein UL9 (UL9).